A 134-amino-acid chain; its full sequence is MARVTVEDCIDKVENRFELVLLASHRARLISQGSSITIDRDNDKNPVVALREIADETLSPDDLKEDLIHSLQKHVEIDEPEPDPASLLAAGGNASASGDEEEDAPEAVTFDQMSEEELLAGIEGLVPPEKSDDY.

The tract at residues 77-108 is disordered; that stretch reads IDEPEPDPASLLAAGGNASASGDEEEDAPEAV. Low complexity predominate over residues 85–97; the sequence is ASLLAAGGNASAS.

This sequence belongs to the RNA polymerase subunit omega family. In terms of assembly, the RNAP catalytic core consists of 2 alpha, 1 beta, 1 beta' and 1 omega subunit. When a sigma factor is associated with the core the holoenzyme is formed, which can initiate transcription.

The catalysed reaction is RNA(n) + a ribonucleoside 5'-triphosphate = RNA(n+1) + diphosphate. Its function is as follows. Promotes RNA polymerase assembly. Latches the N- and C-terminal regions of the beta' subunit thereby facilitating its interaction with the beta and alpha subunits. The chain is DNA-directed RNA polymerase subunit omega from Rhizobium rhizogenes (strain K84 / ATCC BAA-868) (Agrobacterium radiobacter).